A 34-amino-acid chain; its full sequence is Photosystem II reaction center protein M (34 aa).

A helical transmembrane segment spans residues 5–25 (ILAFSATALLILFPTALLLIL).

Belongs to the PsbM family. PSII is composed of 1 copy each of membrane proteins PsbA, PsbB, PsbC, PsbD, PsbE, PsbF, PsbH, PsbI, PsbJ, PsbK, PsbL, PsbM, PsbT, PsbX, PsbY, PsbZ, Psb30/Ycf12, at least 3 peripheral proteins of the oxygen-evolving complex and a large number of cofactors. It forms dimeric complexes.

It localises to the plastid membrane. In terms of biological role, one of the components of the core complex of photosystem II (PSII). PSII is a light-driven water:plastoquinone oxidoreductase that uses light energy to abstract electrons from H(2)O, generating O(2) and a proton gradient subsequently used for ATP formation. It consists of a core antenna complex that captures photons, and an electron transfer chain that converts photonic excitation into a charge separation. This subunit is found at the monomer-monomer interface. This chain is Photosystem II reaction center protein M, found in Cuscuta gronovii (Common dodder).